The sequence spans 68 residues: U2-agatoxin-Ao1u (68 aa).

Residues 1 to 20 (MKAIISLLLISAMVFSMIEA) form the signal peptide. A propeptide spanning residues 21-34 (VPLEEGLQLFEGER) is cleaved from the precursor. Disulfide bonds link Cys36–Cys52, Cys43–Cys57, and Cys51–Cys67.

It belongs to the neurotoxin 01 (U2-agtx) family. As to expression, expressed by the venom gland.

Its subcellular location is the secreted. Functionally, insect active toxin causing rapid but reversible paralysis in crickets. No activity shown in mammals. Does not show effect on mammalian voltage-gated calcium channels. The polypeptide is U2-agatoxin-Ao1u (Agelena orientalis (Funnel-web spider)).